A 63-amino-acid chain; its full sequence is Overexpressed in colon carcinoma 1 protein homolog (63 aa).

Residues 1-10 (MGCGNSTATS) show a composition bias toward polar residues. A disordered region spans residues 1-37 (MGCGNSTATSAAAGRGKPGAVKDATEDSITEDDKRRN).

Belongs to the OCC1 family.

The protein is Overexpressed in colon carcinoma 1 protein homolog of Rattus norvegicus (Rat).